Reading from the N-terminus, the 86-residue chain is Small ribosomal subunit protein bS16 (86 aa).

This sequence belongs to the bacterial ribosomal protein bS16 family.

This Syntrophotalea carbinolica (strain DSM 2380 / NBRC 103641 / GraBd1) (Pelobacter carbinolicus) protein is Small ribosomal subunit protein bS16.